The primary structure comprises 1549 residues: ATP-binding cassette sub-family C member 9 (1549 aa).

At 1 to 30 the chain is on the extracellular side; the sequence is MSLSFCGNNISSYNINDGVLQNSCFVDALN. An N-linked (GlcNAc...) asparagine glycan is attached at Asn-9. Residues 31–51 form a helical membrane-spanning segment; the sequence is LVPHVFLLFITFPILFIGWGS. The Cytoplasmic segment spans residues 52 to 72; the sequence is QSSKVQIHHNTWLHFPGHNLR. Residues 73-93 form a helical membrane-spanning segment; sequence WILTFALLFVHVCEIAEGIVS. Topologically, residues 94 to 101 are extracellular; the sequence is DSRRESRH. The chain crosses the membrane as a helical span at residues 102–122; that stretch reads LHLFMPAVMGFVATTTSIVYY. The Cytoplasmic segment spans residues 123-132; sequence HNIETSNFPK. The chain crosses the membrane as a helical span at residues 133-153; it reads LLLALFLYWVMAFITKTIKLV. The Extracellular portion of the chain corresponds to 154 to 167; that stretch reads KYCQSGLDISNLRF. A helical transmembrane segment spans residues 168–188; it reads CITGMMVILNGLLMAVEINVI. The Cytoplasmic portion of the chain corresponds to 189 to 301; sequence RVRRYVFFMN…AFGRPILLSS (113 aa). The region spanning 297–597 is the ABC transmembrane type-1 1 domain; sequence ILLSSTFRYL…LSTVVRFAVK (301 aa). The helical transmembrane segment at 302–322 threads the bilayer; sequence TFRYLADLLGFAGPLCISGIV. At 323 to 350 the chain is on the extracellular side; it reads QRVNETQNGTNNTTGISETLSSKEFLEN. N-linked (GlcNAc...) asparagine glycosylation is found at Asn-326, Asn-330, Asn-333, and Asn-334. Residues 351–371 form a helical membrane-spanning segment; sequence AYVLAVLLFLALILQRTFLQA. Over 372 to 423 the chain is Cytoplasmic; sequence SYYVTIETGINLRGALLAMIYNKILRLSTSNLSMGEMTLGQINNLVAIETNQ. The chain crosses the membrane as a helical span at residues 424–444; that stretch reads LMWFLFLCPNLWAMPVQIIMG. Topologically, residues 445–455 are extracellular; it reads VILLYNLLGSS. A helical membrane pass occupies residues 456-476; sequence ALVGAAVIVLLAPIQYFIATK. Topologically, residues 477–531 are cytoplasmic; it reads LAEAQKSTLDYSTERLKKTNEILKGIKLLKLYAWEHIFCKSVEETRMKELSSLKT. Residues 532–552 traverse the membrane as a helical segment; it reads FALYTSLSIFMNAAIPIAAVL. Residues 553–571 lie on the Extracellular side of the membrane; the sequence is ATFVTHAYASGNNLKPAEA. A helical transmembrane segment spans residues 572–592; sequence FASLSLFHILVTPLFLLSTVV. Residues 593–990 are Cytoplasmic-facing; sequence RFAVKAIISV…TCWRYLTSGG (398 aa). The ABC transporter 1 domain maps to 672-912; that stretch reads IKVTNGYFSW…DVELYEHWKT (241 aa). 705 to 712 is an ATP binding site; that stretch reads GQVGCGKS. The tract at residues 944–967 is disordered; the sequence is REAKAQMEDEDEEEEEEEDEDDNM. Over residues 951–966 the composition is skewed to acidic residues; the sequence is EDEDEEEEEEEDEDDN. The chain crosses the membrane as a helical span at residues 991-1011; the sequence is FFLLILMIFSKLLKHSVIVAI. The region spanning 994–1274 is the ABC transmembrane type-1 2 domain; the sequence is LILMIFSKLL…VVRNLADLEV (281 aa). The Extracellular portion of the chain corresponds to 1012 to 1034; it reads DYWLATWTSEYSINNTGKADQTY. Residues 1035 to 1055 form a helical membrane-spanning segment; the sequence is YVAGFSILCGAGIFLCLVTSL. Residues 1056–1127 are Cytoplasmic-facing; sequence TVEWMGLTAA…TLLCLSAIGM (72 aa). The helical transmembrane segment at 1128–1148 threads the bilayer; that stretch reads ISYATPVFLVALLPLGVAFYF. Residues 1149-1245 are Extracellular-facing; it reads IQKYFRVASK…IASISGSSNS (97 aa). The chain crosses the membrane as a helical span at residues 1246–1266; that stretch reads GLVGLGLLYALTITNYLNWVV. Topologically, residues 1267-1549 are cytoplasmic; it reads RNLADLEVQM…LFSTLVMTNK (283 aa). An ABC transporter 2 domain is found at 1312–1546; the sequence is IKIHDLCVRY…KNGLFSTLVM (235 aa). ATP is bound at residue 1346-1353; sequence GRTGSGKS.

This sequence belongs to the ABC transporter superfamily. ABCC family. Conjugate transporter (TC 3.A.1.208) subfamily. As to quaternary structure, interacts with KCNJ11. Interacts with KCNJ8.

Its subcellular location is the membrane. Subunit of ATP-sensitive potassium channels (KATP). Can form cardiac and smooth muscle-type KATP channels with KCNJ11. KCNJ11 forms the channel pore while ABCC9 is required for activation and regulation. Can form a sulfonylurea-sensitive but ATP-insensitive potassium channel with KCNJ8. The chain is ATP-binding cassette sub-family C member 9 (ABCC9) from Homo sapiens (Human).